Consider the following 90-residue polypeptide: Small ribosomal subunit protein bS16 (90 aa).

The protein belongs to the bacterial ribosomal protein bS16 family.

The protein is Small ribosomal subunit protein bS16 of Lactobacillus gasseri (strain ATCC 33323 / DSM 20243 / BCRC 14619 / CIP 102991 / JCM 1131 / KCTC 3163 / NCIMB 11718 / NCTC 13722 / AM63).